The sequence spans 446 residues: Phosphoglucosamine mutase (446 aa).

Residue Ser99 is the Phosphoserine intermediate of the active site. Positions 99, 242, 244, and 246 each coordinate Mg(2+). At Ser99 the chain carries Phosphoserine.

This sequence belongs to the phosphohexose mutase family. Requires Mg(2+) as cofactor. Activated by phosphorylation.

It catalyses the reaction alpha-D-glucosamine 1-phosphate = D-glucosamine 6-phosphate. Its function is as follows. Catalyzes the conversion of glucosamine-6-phosphate to glucosamine-1-phosphate. This chain is Phosphoglucosamine mutase, found in Campylobacter fetus subsp. fetus (strain 82-40).